An 832-amino-acid polypeptide reads, in one-letter code: MSMSHLYGRRGDEEEEDGVEIEKFEVSEWDLANEFNPDRRRYRQTKEEATYGIWAEQDSDDERPSFGGKRAKDYSTPVSFVSAGLRKTAAEEKAEREGSDDSDAEEAPPPPRAAAPKKLQTGGSFKTSQRFAGGIRTGQDLGNWEKHTRGIGQKLLQKMGYVPGKGLGKNAQGIVNPIEAKLRKGKGAVGAYGSERTQQSLQDFPVVDSEEEEEEEFQKELGQWRKEPGTAKKKPKYSYRTVDDLKAHGTRANMSMSRPAGELAQVKVIDMTGREQKVYNSYSHMSQKHSVPEEAPLSVSTREQKSSGFALPELEHNLKLLIELTEQDILQSARLLQHEKDTVVTLTHESDALQVRLAEEEETLGRLEQVMSLVERFEAGDKEGDPALSLQECAKIFEQLQTEFYQEYKTMGLGDLAVSVVHPLLKEKLRNWDPLKDCSDGLEEVGQWRAILESTLSLHSGPDTTNMDPYHRLIWEVWVPVMRTCVSQWQPRNVGPMVDCVECWAPVLPLWILDHVLEQLIFPRLQREVDNWNPLTDTVPIHSWIHPWLPLMQTRLEPLYAPIRSKLAHALQRWHPSDSSARLILQPWRDVFTPGAWEAFMVKNIVPKLALCLGELVVNPHQQLLDPFNWVMDWECMLSVSSMVGLLDKNFFPKWLQVLCSWLSNNPNYEEITKWYLGWKGLLSENLLSHPLVKEKLNEALDIMNRAVASGLGGYMQPGARENIAYLIQTERRKDFQCELQPERREVDNSATRPPGMAAVPASVPTNFKDLVQAKAEENGIVFMPLVAKRHMGKQLFTFGRIVIYIERGVVFVQGEKTWVPTSLQSLIDMAK.

Disordered stretches follow at residues 1–21 (MSMS…GVEI) and 33–145 (NEFN…GNWE). Basic and acidic residues-rich tracts occupy residues 36-49 (NPDR…KEEA) and 88-99 (TAAEEKAEREGS). The span at 121-130 (TGGSFKTSQR) shows a compositional bias: polar residues. Residues 148–194 (TRGIGQKLLQKMGYVPGKGLGKNAQGIVNPIEAKLRKGKGAVGAYGS) enclose the G-patch domain. Ser209 is subject to Phosphoserine.

The protein belongs to the TFP11/STIP family. As to quaternary structure, identified in the spliceosome C complex.

It localises to the nucleus. Functionally, involved in pre-mRNA splicing, specifically in spliceosome disassembly during late-stage splicing events. This Danio rerio (Zebrafish) protein is Tuftelin-interacting protein 11 (tfip11).